The primary structure comprises 570 residues: Sulfite reductase [NADPH] hemoprotein beta-component (570 aa).

Residues Cys434, Cys440, Cys479, and Cys483 each contribute to the [4Fe-4S] cluster site. Cys483 is a binding site for siroheme.

It belongs to the nitrite and sulfite reductase 4Fe-4S domain family. Alpha(8)-beta(8). The alpha component is a flavoprotein, the beta component is a hemoprotein. It depends on siroheme as a cofactor. Requires [4Fe-4S] cluster as cofactor.

It catalyses the reaction hydrogen sulfide + 3 NADP(+) + 3 H2O = sulfite + 3 NADPH + 4 H(+). Its pathway is sulfur metabolism; hydrogen sulfide biosynthesis; hydrogen sulfide from sulfite (NADPH route): step 1/1. In terms of biological role, component of the sulfite reductase complex that catalyzes the 6-electron reduction of sulfite to sulfide. This is one of several activities required for the biosynthesis of L-cysteine from sulfate. The polypeptide is Sulfite reductase [NADPH] hemoprotein beta-component (Escherichia coli (strain B / BL21-DE3)).